We begin with the raw amino-acid sequence, 467 residues long: Ribulose bisphosphate carboxylase large chain (467 aa).

An N6,N6,N6-trimethyllysine modification is found at K5. Positions 114 and 164 each coordinate substrate. K166 serves as the catalytic Proton acceptor. Residue K168 participates in substrate binding. Mg(2+) contacts are provided by K192, D194, and E195. K192 carries the post-translational modification N6-carboxylysine. H285 acts as the Proton acceptor in catalysis. Substrate is bound by residues R286, H318, and S370.

Belongs to the RuBisCO large chain family. Type I subfamily. Heterohexadecamer of 8 large chains and 8 small chains; disulfide-linked. The disulfide link is formed within the large subunit homodimers. Requires Mg(2+) as cofactor. In terms of processing, the disulfide bond which can form in the large chain dimeric partners within the hexadecamer appears to be associated with oxidative stress and protein turnover.

Its subcellular location is the plastid. The protein resides in the chloroplast. The enzyme catalyses 2 (2R)-3-phosphoglycerate + 2 H(+) = D-ribulose 1,5-bisphosphate + CO2 + H2O. It catalyses the reaction D-ribulose 1,5-bisphosphate + O2 = 2-phosphoglycolate + (2R)-3-phosphoglycerate + 2 H(+). RuBisCO catalyzes two reactions: the carboxylation of D-ribulose 1,5-bisphosphate, the primary event in carbon dioxide fixation, as well as the oxidative fragmentation of the pentose substrate in the photorespiration process. Both reactions occur simultaneously and in competition at the same active site. This is Ribulose bisphosphate carboxylase large chain from Jasminum simplicifolium subsp. suavissimum (Native jasmine).